A 617-amino-acid polypeptide reads, in one-letter code: Procollagen galactosyltransferase 1 (617 aa).

An N-terminal signal peptide occupies residues 1–31 (MAALPRGSRGLPLLPLLLLLPPLGGPRGADG). N-linked (GlcNAc...) asparagine glycans are attached at residues Asn-91, Asn-179, and Asn-376. The span at 582–601 (DRAKSQKMREQQALSREAKN) shows a compositional bias: basic and acidic residues. A disordered region spans residues 582–617 (DRAKSQKMREQQALSREAKNSDVLQSPLDSTARDEL). The short motif at 614-617 (RDEL) is the Prevents secretion from ER element.

Belongs to the glycosyltransferase 25 family. N-glycosylated.

The protein resides in the endoplasmic reticulum lumen. It catalyses the reaction (5R)-5-hydroxy-L-lysyl-[collagen] + UDP-alpha-D-galactose = (5R)-5-O-(beta-D-galactosyl)-5-hydroxy-L-lysyl-[collagen] + UDP + H(+). Beta-galactosyltransferase that transfers beta-galactose to hydroxylysine residues of type I collagen. By acting on collagen glycosylation, facilitates the formation of collagen triple helix. Also involved in the biosynthesis of collagen type IV. This chain is Procollagen galactosyltransferase 1 (Colgalt1), found in Mus musculus (Mouse).